An 84-amino-acid chain; its full sequence is Cytochrome b559 subunit alpha (84 aa).

A helical membrane pass occupies residues 22 to 36 (VIHSITIPSLFVAGW). Position 24 (His-24) interacts with heme.

Belongs to the PsbE/PsbF family. In terms of assembly, heterodimer of an alpha subunit and a beta subunit. PSII is composed of 1 copy each of membrane proteins PsbA, PsbB, PsbC, PsbD, PsbE, PsbF, PsbH, PsbI, PsbJ, PsbK, PsbL, PsbM, PsbT, PsbX, PsbY, PsbZ, Psb30/Ycf12, at least 3 peripheral proteins of the oxygen-evolving complex and a large number of cofactors. It forms dimeric complexes. Heme b is required as a cofactor.

Its subcellular location is the plastid. It localises to the chloroplast thylakoid membrane. Functionally, this b-type cytochrome is tightly associated with the reaction center of photosystem II (PSII). PSII is a light-driven water:plastoquinone oxidoreductase that uses light energy to abstract electrons from H(2)O, generating O(2) and a proton gradient subsequently used for ATP formation. It consists of a core antenna complex that captures photons, and an electron transfer chain that converts photonic excitation into a charge separation. This chain is Cytochrome b559 subunit alpha, found in Gracilaria tenuistipitata var. liui (Red alga).